A 905-amino-acid chain; its full sequence is Cation-transporting ATPase pma1 (905 aa).

4 consecutive transmembrane segments (helical) span residues 60 to 80 (FLLQ…TVKA), 81 to 101 (FLGS…NAII), 248 to 268 (FSHT…AVGW), and 283 to 303 (ALAV…TLAI). The active-site 4-aspartylphosphate intermediate is the Asp-333. 5 consecutive transmembrane segments (helical) span residues 716 to 736 (ILIS…VLWL), 774 to 794 (LLHR…GMFE), 809 to 829 (MAIQ…SQLG), 848 to 868 (ILLL…QLPF), and 880 to 900 (WQQW…AILA).

Belongs to the cation transport ATPase (P-type) (TC 3.A.3) family. Type IIA subfamily.

The protein localises to the cell membrane. The catalysed reaction is ATP + H2O = ADP + phosphate + H(+). Could mediate calcium influx. The sequence is that of Cation-transporting ATPase pma1 (pma1) from Synechocystis sp. (strain ATCC 27184 / PCC 6803 / Kazusa).